The following is a 364-amino-acid chain: Peptide chain release factor 1 (364 aa).

At Q237 the chain carries N5-methylglutamine.

Belongs to the prokaryotic/mitochondrial release factor family. In terms of processing, methylated by PrmC. Methylation increases the termination efficiency of RF1.

It is found in the cytoplasm. In terms of biological role, peptide chain release factor 1 directs the termination of translation in response to the peptide chain termination codons UAG and UAA. The polypeptide is Peptide chain release factor 1 (Rubrobacter xylanophilus (strain DSM 9941 / JCM 11954 / NBRC 16129 / PRD-1)).